We begin with the raw amino-acid sequence, 348 residues long: uncharacterized protein (348 aa).

This is an uncharacterized protein from Caenorhabditis elegans.